Here is a 502-residue protein sequence, read N- to C-terminus: ATP synthase subunit alpha (502 aa).

Residue 169-176 (GDRQTGKT) coordinates ATP.

The protein belongs to the ATPase alpha/beta chains family. As to quaternary structure, F-type ATPases have 2 components, CF(1) - the catalytic core - and CF(0) - the membrane proton channel. CF(1) has five subunits: alpha(3), beta(3), gamma(1), delta(1), epsilon(1). CF(0) has three main subunits: a(1), b(2) and c(9-12). The alpha and beta chains form an alternating ring which encloses part of the gamma chain. CF(1) is attached to CF(0) by a central stalk formed by the gamma and epsilon chains, while a peripheral stalk is formed by the delta and b chains.

Its subcellular location is the cell inner membrane. It carries out the reaction ATP + H2O + 4 H(+)(in) = ADP + phosphate + 5 H(+)(out). Produces ATP from ADP in the presence of a proton gradient across the membrane. The alpha chain is a regulatory subunit. The sequence is that of ATP synthase subunit alpha from Trichlorobacter lovleyi (strain ATCC BAA-1151 / DSM 17278 / SZ) (Geobacter lovleyi).